We begin with the raw amino-acid sequence, 118 residues long: 5-hydroxyisourate hydrolase (118 aa).

3 residues coordinate substrate: histidine 7, arginine 46, and tyrosine 115.

This sequence belongs to the transthyretin family. 5-hydroxyisourate hydrolase subfamily. Homotetramer.

The catalysed reaction is 5-hydroxyisourate + H2O = 5-hydroxy-2-oxo-4-ureido-2,5-dihydro-1H-imidazole-5-carboxylate + H(+). Functionally, catalyzes the hydrolysis of 5-hydroxyisourate (HIU) to 2-oxo-4-hydroxy-4-carboxy-5-ureidoimidazoline (OHCU). In Brucella melitensis biotype 1 (strain ATCC 23456 / CCUG 17765 / NCTC 10094 / 16M), this protein is 5-hydroxyisourate hydrolase.